The following is a 240-amino-acid chain: Keratinocyte-associated protein 3 (240 aa).

4 helical membrane passes run 21 to 41 (VGLALILVGHVNLLLGAVLHG), 63 to 83 (VISVGSGLLSVSVGLVALLAS), 94 to 114 (VLLALALVNLLLSVACSLGLL), and 163 to 183 (ALALWIPSLLMSAGEAALSGY).

It belongs to the TMEM54 family. In terms of tissue distribution, expressed in skin, pancreas and keratinocytes.

The protein resides in the membrane. This chain is Keratinocyte-associated protein 3 (KRTCAP3), found in Homo sapiens (Human).